A 393-amino-acid polypeptide reads, in one-letter code: Short-chain dehydrogenase/reductase family 42E member 1 (393 aa).

Catalysis depends on Tyr-152, which acts as the Proton acceptor. An NAD(+)-binding site is contributed by Lys-156. The next 2 helical transmembrane spans lie at 282-302 (LPLT…FILG) and 371-391 (GLVI…SVIL).

It belongs to the 3-beta-HSD family.

It localises to the membrane. This chain is Short-chain dehydrogenase/reductase family 42E member 1 (SDR42E1), found in Bos taurus (Bovine).